Here is a 698-residue protein sequence, read N- to C-terminus: MAAAGGLPASATLLLLVIAAVAVAPLASAVRPVSDAHRSAAAELFAASPDGSFGDLETTYEAVRTFQILGVEKDKGLIGKACKFAAEKLASSSSSPAKDLFHAARISGVLKCSVDSGVYDDVATRLKAVIKDTNSLLELYYSVGGLLSIKEQGHNVVLPDADNTFHAIKALSQSDGRWRYDTNSAESSTFAAGIALEALSAVISLADSEVDSSMIAVVKNDIVKLFDTIKSYDDGTFYFDEKHVDAAEYKGPITTSASVVRGVTSFAAVASGKLNIPGEKILGLAKFFLGIGLPGSAKDCFNQIESLSFLENNRVFVPLVLSLPSKVFSLTSKDQLKVEVTTVFGSAAPPLRVNLVQVLGSDSKVITTETKELQFDLDNNVHYLDIAPLKIDVGKYSLVFEISLQEQEHETIYATGGTNTEAIFVTGLIKVDKAEIGISDNDAGTVESVQKIDLQKDTSVSLSANHLQKLRLSFQLSTPLGKTFKPHQVFLKLKHDESKVEHLFVVPGSARQFKIVLDFLGLVEKFYYLSGRYDLELAVGDAAMENSFLRALGHIELDLPEAPEKAPKPPAQAVDPFSKFGPKKEISHIFRSPEKRPPKELSFAFTGLTLLPIVGFLIGLMRLGVNLKNFPSLPAPAAFASLFHAGIGAVLLLYVLFWIKLDLFTTLKYLSFLGVFLVFVGHRALSYLSSTSAKQKTA.

Residues 1 to 29 (MAAAGGLPASATLLLLVIAAVAVAPLASA) form the signal peptide. The Lumenal segment spans residues 30–600 (VRPVSDAHRS…RSPEKRPPKE (571 aa)). Residues 601 to 621 (LSFAFTGLTLLPIVGFLIGLM) form a helical membrane-spanning segment. At 622–638 (RLGVNLKNFPSLPAPAA) the chain is on the cytoplasmic side. A helical membrane pass occupies residues 639-659 (FASLFHAGIGAVLLLYVLFWI). A topological domain (lumenal) is located at residue K660. A helical membrane pass occupies residues 661–681 (LDLFTTLKYLSFLGVFLVFVG). The Cytoplasmic segment spans residues 682-698 (HRALSYLSSTSAKQKTA).

This sequence belongs to the SWP1 family. As to quaternary structure, component of the oligosaccharyltransferase (OST) complex.

The protein resides in the endoplasmic reticulum membrane. It participates in protein modification; protein glycosylation. Its function is as follows. Subunit of the oligosaccharyl transferase (OST) complex that catalyzes the initial transfer of a defined glycan (Glc(3)Man(9)GlcNAc(2) in eukaryotes) from the lipid carrier dolichol-pyrophosphate to an asparagine residue within an Asn-X-Ser/Thr consensus motif in nascent polypeptide chains, the first step in protein N-glycosylation. N-glycosylation occurs cotranslationally and the complex associates with the Sec61 complex at the channel-forming translocon complex that mediates protein translocation across the endoplasmic reticulum (ER). All subunits are required for a maximal enzyme activity. The sequence is that of Dolichyl-diphosphooligosaccharide--protein glycosyltransferase subunit 2 (RPN2) from Oryza sativa subsp. japonica (Rice).